The primary structure comprises 333 residues: Adenosine deaminase (333 aa).

Zn(2+) is bound by residues His-12 and His-14. His-14, Asp-16, and Gly-170 together coordinate substrate. His-197 serves as a coordination point for Zn(2+). Glu-200 (proton donor) is an active-site residue. Asp-278 is a Zn(2+) binding site. Position 279 (Asp-279) interacts with substrate.

The protein belongs to the metallo-dependent hydrolases superfamily. Adenosine and AMP deaminases family. Adenosine deaminase subfamily. The cofactor is Zn(2+).

It catalyses the reaction adenosine + H2O + H(+) = inosine + NH4(+). It carries out the reaction 2'-deoxyadenosine + H2O + H(+) = 2'-deoxyinosine + NH4(+). Its function is as follows. Catalyzes the hydrolytic deamination of adenosine and 2-deoxyadenosine. The protein is Adenosine deaminase of Escherichia coli O7:K1 (strain IAI39 / ExPEC).